The chain runs to 310 residues: D-alanine--D-alanine ligase (310 aa).

Positions 107 to 305 (KKVWQSAGLP…FSALVQSILA (199 aa)) constitute an ATP-grasp domain. An ATP-binding site is contributed by 134–189 (EQLHCQDFVIKPALEGSSVGVSRVKNQEQLAAAIPFAGGARAKIMAEPWIVGRELT). Positions 259, 272, and 274 each coordinate Mg(2+).

Belongs to the D-alanine--D-alanine ligase family. Requires Mg(2+) as cofactor. Mn(2+) serves as cofactor.

It localises to the cytoplasm. The enzyme catalyses 2 D-alanine + ATP = D-alanyl-D-alanine + ADP + phosphate + H(+). Its pathway is cell wall biogenesis; peptidoglycan biosynthesis. In terms of biological role, cell wall formation. The polypeptide is D-alanine--D-alanine ligase (Dichelobacter nodosus (strain VCS1703A)).